Consider the following 326-residue polypeptide: Tetraacyldisaccharide 4'-kinase (326 aa).

Residue 55–62 (TAGGNGKT) participates in ATP binding.

It belongs to the LpxK family.

The catalysed reaction is a lipid A disaccharide + ATP = a lipid IVA + ADP + H(+). It functions in the pathway glycolipid biosynthesis; lipid IV(A) biosynthesis; lipid IV(A) from (3R)-3-hydroxytetradecanoyl-[acyl-carrier-protein] and UDP-N-acetyl-alpha-D-glucosamine: step 6/6. Functionally, transfers the gamma-phosphate of ATP to the 4'-position of a tetraacyldisaccharide 1-phosphate intermediate (termed DS-1-P) to form tetraacyldisaccharide 1,4'-bis-phosphate (lipid IVA). The sequence is that of Tetraacyldisaccharide 4'-kinase from Erwinia tasmaniensis (strain DSM 17950 / CFBP 7177 / CIP 109463 / NCPPB 4357 / Et1/99).